The primary structure comprises 257 residues: Phosphate import ATP-binding protein PstB (257 aa).

The ABC transporter domain maps to 11–252; the sequence is IQVRDLNFYY…PAKKQTEDYI (242 aa). 43–50 serves as a coordination point for ATP; the sequence is GPSGCGKS.

The protein belongs to the ABC transporter superfamily. Phosphate importer (TC 3.A.1.7) family. The complex is composed of two ATP-binding proteins (PstB), two transmembrane proteins (PstC and PstA) and a solute-binding protein (PstS).

It localises to the cell inner membrane. The enzyme catalyses phosphate(out) + ATP + H2O = ADP + 2 phosphate(in) + H(+). Functionally, part of the ABC transporter complex PstSACB involved in phosphate import. Responsible for energy coupling to the transport system. In Enterobacter cloacae, this protein is Phosphate import ATP-binding protein PstB.